Reading from the N-terminus, the 52-residue chain is uncharacterized protein (52 aa).

2 helical membrane-spanning segments follow: residues 4–24 (IIIP…ISLE) and 25–45 (MSIV…FLFV).

Its subcellular location is the cell membrane. This is an uncharacterized protein from Bacillus subtilis (strain 168).